The primary structure comprises 66 residues: Stress-associated endoplasmic reticulum protein 1 (66 aa).

Residues 1–33 (MVAKQRIRMANEKHSKNITQRGNVAKTSRNAPG) form a disordered region. The Cytoplasmic segment spans residues 1–38 (MVAKQRIRMANEKHSKNITQRGNVAKTSRNAPGEKASV). Residues 17–30 (NITQRGNVAKTSRN) show a composition bias toward polar residues. Residues 39 to 59 (GPWLLALFIFVVCGSAIFQII) form a helical membrane-spanning segment. The Extracellular portion of the chain corresponds to 60–66 (QSIRMGM).

It belongs to the RAMP4 family. In terms of assembly, interacts with SEC61B, SEC61A1 and the SEC61 complex. Interacts with CANX.

The protein localises to the membrane. Its subcellular location is the endoplasmic reticulum membrane. Its function is as follows. Interacts with target proteins during their translocation into the lumen of the endoplasmic reticulum. Protects unfolded target proteins against degradation during ER stress. May facilitate glycosylation of target proteins after termination of ER stress. May modulate the use of N-glycosylation sites on target proteins. This chain is Stress-associated endoplasmic reticulum protein 1 (SERP1), found in Pongo abelii (Sumatran orangutan).